The primary structure comprises 326 residues: Putative ribose-phosphate pyrophosphokinase 2 (326 aa).

ATP is bound by residues 43-45 and 102-103; these read DGE and RQ. Histidine 136 is a binding site for Mg(2+). D-ribose 5-phosphate-binding positions include aspartate 225 and 229 to 233; that span reads NTGKT.

The protein belongs to the ribose-phosphate pyrophosphokinase family. Class I subfamily. As to quaternary structure, homohexamer. Mg(2+) serves as cofactor.

The protein localises to the cytoplasm. It carries out the reaction D-ribose 5-phosphate + ATP = 5-phospho-alpha-D-ribose 1-diphosphate + AMP + H(+). It participates in metabolic intermediate biosynthesis; 5-phospho-alpha-D-ribose 1-diphosphate biosynthesis; 5-phospho-alpha-D-ribose 1-diphosphate from D-ribose 5-phosphate (route I): step 1/1. Its function is as follows. Involved in the biosynthesis of the central metabolite phospho-alpha-D-ribosyl-1-pyrophosphate (PRPP) via the transfer of pyrophosphoryl group from ATP to 1-hydroxyl of ribose-5-phosphate (Rib-5-P). The sequence is that of Putative ribose-phosphate pyrophosphokinase 2 from Streptococcus pyogenes serotype M18 (strain MGAS8232).